Here is a 269-residue protein sequence, read N- to C-terminus: Indole-3-glycerol phosphate synthase (269 aa).

Belongs to the TrpC family.

The catalysed reaction is 1-(2-carboxyphenylamino)-1-deoxy-D-ribulose 5-phosphate + H(+) = (1S,2R)-1-C-(indol-3-yl)glycerol 3-phosphate + CO2 + H2O. It participates in amino-acid biosynthesis; L-tryptophan biosynthesis; L-tryptophan from chorismate: step 4/5. The protein is Indole-3-glycerol phosphate synthase of Roseiflexus castenholzii (strain DSM 13941 / HLO8).